Reading from the N-terminus, the 272-residue chain is MPQHKVSSDSPIGIFDSGIGGLTVVKAVQAALPSERIIYFGDTARVPYGSKSQVTIRKYAREDTELLMKHQPKLIIVACNTVSALALDVVEQTAGGIPVIGVLKAGAELAVQKTKSGRIGVIGTQATIGSNAYTCAIREEKETLEVFPKACPLFVPLAEEGFIDHPATRLVAEEYLAAFTGKEIDTLVLGCTHYPILRKIIESITGPEITIIDSAEAVASKAGELLAARGLLNQSPEKALPHLMVSDLPQKFRELYRLFMGTELPDVELVGM.

Substrate-binding positions include 16–17 (DS) and 48–49 (YG). The active-site Proton donor/acceptor is the Cys79. 80 to 81 (NT) lines the substrate pocket. Cys191 (proton donor/acceptor) is an active-site residue. Residue 192–193 (TH) participates in substrate binding.

The protein belongs to the aspartate/glutamate racemases family.

The enzyme catalyses L-glutamate = D-glutamate. Its pathway is cell wall biogenesis; peptidoglycan biosynthesis. Functionally, provides the (R)-glutamate required for cell wall biosynthesis. This chain is Glutamate racemase, found in Chlorobaculum tepidum (strain ATCC 49652 / DSM 12025 / NBRC 103806 / TLS) (Chlorobium tepidum).